The primary structure comprises 342 residues: Autoinducer 2 import system permease protein LsrC (342 aa).

Over 1-13 (MLKFIQNNREITA) the chain is Periplasmic. Residues 14–34 (LLAVVLLFVLPGFLDRQYLSV) form a helical membrane-spanning segment. The Cytoplasmic portion of the chain corresponds to 35–38 (QTLT). The helical transmembrane segment at 39–59 (MVYSSAQILILLAMGATLVML) threads the bilayer. Residues 60-69 (TRNIDVSVGS) lie on the Periplasmic side of the membrane. A helical transmembrane segment spans residues 70-90 (ITGMCAVLLGMLLNAGYSLPV). The Cytoplasmic segment spans residues 91 to 92 (AC). The chain crosses the membrane as a helical span at residues 93–113 (VATLLLGLLAGFFNGVLVAWL). Lysine 114 is a topological domain (periplasmic). A helical transmembrane segment spans residues 115-135 (IPAIVATLGTLGLYRGIMLLW). Topologically, residues 136–154 (TGGKWIEGLPAELKQLSAP) are cytoplasmic. A helical membrane pass occupies residues 155–175 (LLLGVSAIGWLTIILVAFMAW). At 176-212 (LLAKTAFGRSFYATGDNLQGARQLGVRTEAIRIVAFS) the chain is on the periplasmic side. A helical membrane pass occupies residues 213–233 (LNGCMAALAGIVFASQIGFIP). At 234-251 (NQTGTGLEMKAIAACVLG) the chain is on the cytoplasmic side. The chain crosses the membrane as a helical span at residues 252-272 (GISLLGGSGAIIGAVLGAWFL). Over 273-283 (TQIDSVLVLLR) the chain is Periplasmic. A helical transmembrane segment spans residues 284 to 304 (IPAWWNDFIAGLVLLAVLVFD). At 305–342 (GRLRCALERNLRRQKYARFMTPPPSVKPASSGKKREAA) the chain is on the cytoplasmic side.

This sequence belongs to the binding-protein-dependent transport system permease family. AraH/RbsC subfamily. As to quaternary structure, the complex is composed of two ATP-binding proteins (LsrA), two transmembrane proteins (LsrC and LsrD) and a solute-binding protein (LsrB).

Its subcellular location is the cell inner membrane. Part of the ABC transporter complex LsrABCD involved in autoinducer 2 (AI-2) import. Probably responsible for the translocation of the substrate across the membrane. This is Autoinducer 2 import system permease protein LsrC (lsrC) from Escherichia coli (strain K12 / DH10B).